Reading from the N-terminus, the 256-residue chain is Small ribosomal subunit protein eS1 (256 aa).

A2 bears the N-acetylalanine; partial mark.

Belongs to the eukaryotic ribosomal protein eS1 family. As to quaternary structure, component of the small ribosomal subunit. Mature ribosomes consist of a small (40S) and a large (60S) subunit. The 40S subunit contains about 33 different proteins and 1 molecule of RNA (18S). The 60S subunit contains about 49 different proteins and 3 molecules of RNA (25S, 5.8S and 5S).

It localises to the cytoplasm. This is Small ribosomal subunit protein eS1 from Candida albicans (strain SC5314 / ATCC MYA-2876) (Yeast).